Reading from the N-terminus, the 187-residue chain is Calmodulin-like protein 30 (187 aa).

The segment at 21–47 (KPSRMFSRDRQSSGLSSPGPGGFSQPS) is disordered. A compositionally biased stretch (low complexity) spans 32-47 (SSGLSSPGPGGFSQPS). 4 EF-hand domains span residues 46 to 81 (PSVN…LGQE), 82 to 117 (RAIE…SGGI), 129 to 152 (FDLN…LGER), and 153 to 187 (CSLE…SNNV). Asp-59, Asp-61, Asp-63, Lys-65, Glu-70, Asp-95, Asp-97, Asp-99, Glu-106, Asp-130, Asn-132, Asp-134, Lys-136, Glu-141, Asp-166, Asp-168, Asp-170, and Glu-177 together coordinate Ca(2+).

It belongs to the calmodulin family.

Functionally, potential calcium sensor. The chain is Calmodulin-like protein 30 from Arabidopsis thaliana (Mouse-ear cress).